Consider the following 447-residue polypeptide: Asparagine--tRNA ligase (447 aa).

The protein belongs to the class-II aminoacyl-tRNA synthetase family. As to quaternary structure, homodimer.

It localises to the cytoplasm. The enzyme catalyses tRNA(Asn) + L-asparagine + ATP = L-asparaginyl-tRNA(Asn) + AMP + diphosphate + H(+). This is Asparagine--tRNA ligase from Mycoplasma mobile (strain ATCC 43663 / 163K / NCTC 11711) (Mesomycoplasma mobile).